Reading from the N-terminus, the 530-residue chain is Autoinducer-2 kinase (530 aa).

This sequence belongs to the FGGY kinase family.

The protein resides in the cytoplasm. It catalyses the reaction (S)-4,5-dihydroxypentane-2,3-dione + ATP = (2S)-2-hydroxy-3,4-dioxopentyl phosphate + ADP + H(+). Its function is as follows. Catalyzes the phosphorylation of autoinducer-2 (AI-2) to phospho-AI-2, which subsequently inactivates the transcriptional regulator LsrR and leads to the transcription of the lsr operon. Phosphorylates the ring-open form of (S)-4,5-dihydroxypentane-2,3-dione (DPD), which is the precursor to all AI-2 signaling molecules, at the C5 position. This chain is Autoinducer-2 kinase, found in Yersinia pseudotuberculosis serotype O:3 (strain YPIII).